The chain runs to 355 residues: S-adenosylmethionine:tRNA ribosyltransferase-isomerase (355 aa).

The protein belongs to the QueA family. Monomer.

The protein resides in the cytoplasm. It carries out the reaction 7-aminomethyl-7-carbaguanosine(34) in tRNA + S-adenosyl-L-methionine = epoxyqueuosine(34) in tRNA + adenine + L-methionine + 2 H(+). It functions in the pathway tRNA modification; tRNA-queuosine biosynthesis. Its function is as follows. Transfers and isomerizes the ribose moiety from AdoMet to the 7-aminomethyl group of 7-deazaguanine (preQ1-tRNA) to give epoxyqueuosine (oQ-tRNA). In Burkholderia lata (strain ATCC 17760 / DSM 23089 / LMG 22485 / NCIMB 9086 / R18194 / 383), this protein is S-adenosylmethionine:tRNA ribosyltransferase-isomerase.